The sequence spans 104 residues: A-type ATP synthase subunit F (104 aa).

The protein belongs to the V-ATPase F subunit family. In terms of assembly, has multiple subunits with at least A(3), B(3), C, D, E, F, H, I and proteolipid K(x).

Its subcellular location is the cell membrane. Its function is as follows. Component of the A-type ATP synthase that produces ATP from ADP in the presence of a proton gradient across the membrane. The protein is A-type ATP synthase subunit F of Thermoplasma acidophilum (strain ATCC 25905 / DSM 1728 / JCM 9062 / NBRC 15155 / AMRC-C165).